The primary structure comprises 360 residues: DNA replication and repair protein RecF (360 aa).

30-37 lines the ATP pocket; the sequence is GQNGSGKT.

Belongs to the RecF family.

Its subcellular location is the cytoplasm. Its function is as follows. The RecF protein is involved in DNA metabolism; it is required for DNA replication and normal SOS inducibility. RecF binds preferentially to single-stranded, linear DNA. It also seems to bind ATP. This Shewanella loihica (strain ATCC BAA-1088 / PV-4) protein is DNA replication and repair protein RecF.